The following is a 301-amino-acid chain: Quinolinate synthase (301 aa).

Iminosuccinate-binding residues include His21 and Ser38. Residue Cys83 coordinates [4Fe-4S] cluster. Residues 109–111 (YIN) and Ser126 each bind iminosuccinate. [4Fe-4S] cluster is bound at residue Cys169. Residues 195–197 (HPE) and Thr212 contribute to the iminosuccinate site. Cys257 provides a ligand contact to [4Fe-4S] cluster.

Belongs to the quinolinate synthase family. Type 2 subfamily. [4Fe-4S] cluster is required as a cofactor.

The protein localises to the cytoplasm. It carries out the reaction iminosuccinate + dihydroxyacetone phosphate = quinolinate + phosphate + 2 H2O + H(+). The protein operates within cofactor biosynthesis; NAD(+) biosynthesis; quinolinate from iminoaspartate: step 1/1. Functionally, catalyzes the condensation of iminoaspartate with dihydroxyacetone phosphate to form quinolinate. This Clostridium perfringens (strain ATCC 13124 / DSM 756 / JCM 1290 / NCIMB 6125 / NCTC 8237 / Type A) protein is Quinolinate synthase.